A 781-amino-acid chain; its full sequence is Pyrin (781 aa).

In terms of domain architecture, Pyrin spans 1–92 (MAKTPSDHLL…AEELHRAAIQ (92 aa)). Positions 93-111 (EYSTQENGTDDSAASSSLG) are enriched in polar residues. The segment at 93–226 (EYSTQENGTD…AGGAPGQKEC (134 aa)) is disordered. A compositionally biased stretch (basic and acidic residues) spans 113-126 (NKPRSLKTPDHPEG). Over residues 153 to 163 (LSRKPLSKRRE) the composition is skewed to basic residues. Phosphoserine is present on Ser242. The interaction with RELA stretch occupies residues 266-280 (KTAANLDSATEPRAR). Disordered stretches follow at residues 270–322 (NLDS…EGDP) and 336–373 (EAVS…QPLP). The B box-type zinc-finger motif lies at 370 to 412 (QPLPQCKRHLKQVQLLFCEDHDEPICLICSLSQEHQGHRVRPI). Positions 413 to 442 (EEVALEHKKKIQKQLEHLKKLRKSGEEQRS) form a coiled coil. Positions 420 to 437 (KKKIQKQLEHLKKLRKSG) match the Nuclear localization signal motif. The required for homotrimerization and induction of pyroptosomes stretch occupies residues 420-582 (KKKIQKQLEH…YFSETLRSEM (163 aa)). The region spanning 580–775 (SEMEMFNVPE…NTAPLTICPV (196 aa)) is the B30.2/SPRY domain.

Homotrimer. Interacts (via the B box-type zinc finger) with PSTPIP1. Interacts (via the B30.2/SPRY domain) with several components of the inflammasome complex, including CASP1 p20 and p10 subunits, CASP5, PYCARD, NLRP1, NLRP2 and NLRP3, as well as with unprocessed IL1B; this interaction may lead to autophagic degradation of these proteins. Component of the AIM2 PANoptosome complex, a multiprotein complex that drives inflammatory cell death (PANoptosis). Interacts with NFKBIA and RELA. Interacts weakly with VASP and ACTR3. Interacts with active ULK1 (phosphorylated on 'Ser-317') and BECN1 simultaneously. Also interacts with ATG16L1 (via WD repeats), and with ATG8 family members, including GABARAP, GABARAPL1 and, to a lesser extent, GABARAPL2, MAP1LC3A/LC3A and MAP1LC3C/LC3C. Interacts with TRIM21. Interacts with YWHAB, YWHAE, YWHAG, YWHAH, YWHAQ and YWHAZ; the interaction is required for the down-regulation of pyrin pro-inflammatory activity. Cleaved by CASP1. The N-terminal cleavage product localizes to the nucleus as a filamentous network and to the cytoplasm, interacts more strongly with RELA and NFKBIA than the full-length protein, enhances the nuclear localization of RELA and induces NFKBIA proteolysis. The C-terminal cleavage product localizes to the cytoplasm. Post-translationally, phosphorylation at Ser-242 is required for the interaction with 14-3-3 proteins and down-regulation of pyrin pro-inflammatory activity. In terms of processing, degraded along with the delivery of its substrates to autolysosomal compartments (at protein level). As to expression, expressed in peripheral blood leukocytes, particularly in mature granulocytes and to a lesser extent in monocytes but not in lymphocytes. Detected in spleen, lung and muscle, probably as a result of leukocyte infiltration in these tissues. Not expressed in thymus, prostate, testis, ovary, small intestine, colon, heart, brain, placenta, liver, kidney, pancreas. Expression detected in several myeloid leukemic, colon cancer, and prostate cancer cell lines.

The protein resides in the cytoplasm. Its subcellular location is the cytoskeleton. The protein localises to the cell projection. It localises to the ruffle. It is found in the lamellipodium. The protein resides in the nucleus. Its subcellular location is the cytoplasmic vesicle. The protein localises to the autophagosome. Functionally, involved in the regulation of innate immunity and the inflammatory response in response to IFNG/IFN-gamma. Organizes autophagic machinery by serving as a platform for the assembly of ULK1, Beclin 1/BECN1, ATG16L1, and ATG8 family members and recognizes specific autophagy targets, thus coordinating target recognition with assembly of the autophagic apparatus and initiation of autophagy. Acts as an autophagy receptor for the degradation of several inflammasome components, including CASP1, NLRP1 and NLRP3, hence preventing excessive IL1B- and IL18-mediated inflammation. However, it can also have a positive effect in the inflammatory pathway, acting as an innate immune sensor that triggers PYCARD/ASC specks formation, caspase-1 activation, and IL1B and IL18 production. Together with AIM2, also acts as a mediator of pyroptosis, necroptosis and apoptosis (PANoptosis), an integral part of host defense against pathogens, in response to bacterial infection. It is required for PSTPIP1-induced PYCARD/ASC oligomerization and inflammasome formation. Recruits PSTPIP1 to inflammasomes, and is required for PSTPIP1 oligomerization. The chain is Pyrin from Homo sapiens (Human).